The chain runs to 73 residues: MAKQDVIEMEGTVVESLPNAMFRVELDNSFNILAHISGKIRRNYIKILPGDRVKVELTPYDLTKGRITYRLRK.

The S1-like domain occupies 1 to 72 (MAKQDVIEME…TKGRITYRLR (72 aa)).

The protein belongs to the IF-1 family. Component of the 30S ribosomal translation pre-initiation complex which assembles on the 30S ribosome in the order IF-2 and IF-3, IF-1 and N-formylmethionyl-tRNA(fMet); mRNA recruitment can occur at any time during PIC assembly.

The protein localises to the cytoplasm. One of the essential components for the initiation of protein synthesis. Stabilizes the binding of IF-2 and IF-3 on the 30S subunit to which N-formylmethionyl-tRNA(fMet) subsequently binds. Helps modulate mRNA selection, yielding the 30S pre-initiation complex (PIC). Upon addition of the 50S ribosomal subunit IF-1, IF-2 and IF-3 are released leaving the mature 70S translation initiation complex. The chain is Translation initiation factor IF-1 from Gloeobacter violaceus (strain ATCC 29082 / PCC 7421).